The sequence spans 433 residues: Apolipoprotein L5 (433 aa).

The tract at residues 346-433 (HHRHLPQKAS…GRQAPGRHRQ (88 aa)) is disordered. Over residues 359–371 (SSSRGRAVRGSRV) the composition is skewed to low complexity. Residues 422–433 (RKGRQAPGRHRQ) show a composition bias toward basic residues.

This sequence belongs to the apolipoprotein L family. As to expression, low level of expression; detected in uterus, testis, skeletal muscle and stomach.

Its subcellular location is the cytoplasm. In terms of biological role, may affect the movement of lipids in the cytoplasm or allow the binding of lipids to organelles. The sequence is that of Apolipoprotein L5 (APOL5) from Homo sapiens (Human).